The sequence spans 304 residues: Glycine--tRNA ligase alpha subunit (304 aa).

Belongs to the class-II aminoacyl-tRNA synthetase family. Tetramer of two alpha and two beta subunits.

The protein resides in the cytoplasm. It carries out the reaction tRNA(Gly) + glycine + ATP = glycyl-tRNA(Gly) + AMP + diphosphate. This Serratia proteamaculans (strain 568) protein is Glycine--tRNA ligase alpha subunit.